The following is a 129-amino-acid chain: Histone H2A-III (129 aa).

Positions 1-22 (MSGRGKQGGKARAKAKSRSSRA) are disordered. Serine 2 bears the N-acetylserine mark. Serine 2 carries the post-translational modification Phosphoserine. Lysine 6 is subject to N6-(2-hydroxyisobutyryl)lysine. An N6-acetyllysine mark is found at lysine 6 and lysine 10. The span at 7–19 (QGGKARAKAKSRS) shows a compositional bias: basic residues. N6-(2-hydroxyisobutyryl)lysine; alternate is present on lysine 10. Position 10 is an N6-lactoyllysine; alternate (lysine 10). Lysine 10 bears the N6-succinyllysine mark. Residues lysine 14 and lysine 16 each participate in a glycyl lysine isopeptide (Lys-Gly) (interchain with G-Cter in ubiquitin) cross-link. An N6-(2-hydroxyisobutyryl)lysine; alternate modification is found at lysine 37. N6-(2-hydroxyisobutyryl)lysine is present on residues lysine 75 and lysine 76. The residue at position 96 (lysine 96) is an N6-(2-hydroxyisobutyryl)lysine; alternate. The residue at position 96 (lysine 96) is an N6-succinyllysine. At lysine 96 the chain carries N6-glutaryllysine; alternate. Position 100 is an N6-glutaryllysine (lysine 100). N5-methylglutamine is present on glutamine 105. The residue at position 119 (lysine 119) is an N6-(2-hydroxyisobutyryl)lysine; alternate. An N6-glutaryllysine; alternate mark is found at lysine 119 and lysine 120. Lysine 120 is covalently cross-linked (Glycyl lysine isopeptide (Lys-Gly) (interchain with G-Cter in ubiquitin)).

The protein belongs to the histone H2A family. As to quaternary structure, the nucleosome is a histone octamer containing two molecules each of H2A, H2B, H3 and H4 assembled in one H3-H4 heterotetramer and two H2A-H2B heterodimers. The octamer wraps approximately 147 bp of DNA. Post-translationally, monoubiquitination of Lys-120 (H2AK119Ub) gives a specific tag for epigenetic transcriptional repression. Following DNA double-strand breaks (DSBs), it is ubiquitinated through 'Lys-63' linkage of ubiquitin moieties, leading to the recruitment of repair proteins to sites of DNA damage. H2AK119Ub and ionizing radiation-induced 'Lys-63'-linked ubiquitination are distinct events. In terms of processing, phosphorylation on Ser-2 is enhanced during mitosis. Phosphorylation on Ser-2 directly represses transcription. Glutamine methylation at Gln-105 (H2AQ104me) by FBL is specifically dedicated to polymerase I. It is present at 35S ribosomal DNA locus and impairs binding of the FACT complex.

The protein localises to the nucleus. It is found in the chromosome. Its function is as follows. Core component of nucleosome. Nucleosomes wrap and compact DNA into chromatin, limiting DNA accessibility to the cellular machineries which require DNA as a template. Histones thereby play a central role in transcription regulation, DNA repair, DNA replication and chromosomal stability. DNA accessibility is regulated via a complex set of post-translational modifications of histones, also called histone code, and nucleosome remodeling. The protein is Histone H2A-III of Gallus gallus (Chicken).